A 377-amino-acid polypeptide reads, in one-letter code: Opsin-5 (377 aa).

The Extracellular segment spans residues 1-33 (MALNHTALPQDERLPHYLRDEDPFASKLSWEAD). A glycan (N-linked (GlcNAc...) asparagine) is linked at N4. The chain crosses the membrane as a helical span at residues 34–54 (LVAGFYLTIIGILSTFGNGYV). Residues 55–74 (LYMSSRRKKKLRPAEIMTIN) lie on the Cytoplasmic side of the membrane. A helical transmembrane segment spans residues 75-95 (LAVCDLGISVVGKPFTIISCF). Residues 96-108 (CHRWVFGWFGCRW) are Extracellular-facing. A disulfide bridge links C106 with C183. Residues 109-129 (YGWAGFFFGCGSLITMTAVSL) traverse the membrane as a helical segment. Topologically, residues 130–150 (DRYLKICYLSYGVWLKRKHAY) are cytoplasmic. A helical transmembrane segment spans residues 151–171 (ICLAVIWAYASFWTTMPLVGL). The Extracellular portion of the chain corresponds to 172–197 (GDYAPEPFGTSCTLDWWLAQASGGGQ). Residues 198-218 (VFILSILFFCLLLPTAVIVFS) form a helical membrane-spanning segment. At 219–252 (YAKIIAKVKSSSKEVAHFDSRIHSSHVLEVKLTK) the chain is on the cytoplasmic side. A helical transmembrane segment spans residues 253–273 (VAMLICAGFLIAWIPYAVVSV). At 274 to 288 (WSAFGRPDSIPIQLS) the chain is on the extracellular side. A helical membrane pass occupies residues 289–309 (VVPTLLAKSAAMYNPIIYQVI). K296 carries the N6-(retinylidene)lysine modification. Over 310–377 (DYRFACCQAG…HSNDGDCGKK (68 aa)) the chain is Cytoplasmic. S-palmitoyl cysteine attachment occurs at residues C315 and C316. The tract at residues 357–377 (FTSAHVMDGESHSNDGDCGKK) is disordered. The segment covering 363-377 (MDGESHSNDGDCGKK) has biased composition (basic and acidic residues).

Belongs to the G-protein coupled receptor 1 family. Opsin subfamily. It is uncertain whether Cys-315 or Cys-316 is palmitoylated. As to expression, expressed in the brain (at protein level). Weakly expressed in the skin and liver (at protein level). Abundantly expressed in striated muscle cells. Expressed in Math7/Atok7-dependent retinal ganglion cells in the ganglion cell layer (at protein level). Additionally expressed in horizontal and amacrine cells in the inner nuclear layer of the retina (at protein level). Expressed around the base of hair follicles and in epidermal and sebaceous gland cells of the outer ear (at protein level). Abundantly expressed in vibrissae hair follicles and weakly expressed in the vibrissae skin pad, dorsal back skin, and tail.

The protein resides in the cell membrane. Functionally, G-protein coupled receptor which selectively activates G(i) type G proteins via ultraviolet A (UVA) light-mediated activation in the retina. Preferentially binds the chromophore 11-cis retinal and is a bistable protein that displays emission peaks at 380 nm (UVA light) and 470 nm (blue light). Required for the light-response in the inner plexiform layer, and contributes to the regulation of the light-response in the nerve fiber layer, via phosphorylated DAT/SLC6A3 dopamine uptake. Involved in local corneal and retinal circadian rhythm photoentrainment via modulation of the UVA light-induced phase-shift of the retina clock. Acts as a circadian photoreceptor in the outer ear and vibrissal pads, via modulation of circadian clock-gene expression in response to violet light during the light-to-dark transition phase and night phase of the circadian cycle. Required in the retina to negatively regulate hyaloid vessel regression during postnatal development via light-dependent OPN5-SLC32A1-DRD2-VEGFR2 signaling. Involved in the light-dependent regulation of retina and vitreous compartment dopamine levels. In Mus musculus (Mouse), this protein is Opsin-5 (Opn5).